The primary structure comprises 526 residues: Type 2 glycosyltransferase (526 aa).

The helical transmembrane segment at 25 to 45 (PSFDFWYSSTFWLYLFLGLWF) threads the bilayer. 2 N-linked (GlcNAc...) asparagine glycosylation sites follow: Asn-298 and Asn-317. Transmembrane regions (helical) follow at residues 340–360 (FATF…SCWW), 375–395 (WSQF…GLFI), and 403–423 (FLPV…YALI). Asn-426 and Asn-517 each carry an N-linked (GlcNAc...) asparagine glycan.

The protein belongs to the GT2 glycosyltransferase family.

The protein localises to the cell membrane. It is found in the secreted. Its subcellular location is the cell wall. Functionally, glycosyltransferase involved in the maintenance of the outermost surface of the fungal cell wall. Likely functions in the synthesis of a currently unknown, potentially minor but widespread, extracellular or outer cell wall polysaccharide which plays a key role in facilitating many interactions between plants and fungi by enabling hyphal growth on solid matrices. The chain is Type 2 glycosyltransferase from Gibberella zeae (strain ATCC MYA-4620 / CBS 123657 / FGSC 9075 / NRRL 31084 / PH-1) (Wheat head blight fungus).